Here is a 677-residue protein sequence, read N- to C-terminus: mRNA export factor Gle1 (677 aa).

Positions 34–48 are enriched in basic and acidic residues; it reads EDREPIWVEGSRKTP. Disordered regions lie at residues 34–65, 113–136, and 294–366; these read EDRE…NNEI, KQDA…DQLQ, and ERQR…ATST. A compositionally biased stretch (pro residues) spans 49 to 60; the sequence is EPPLPEESPAPE. 2 coiled-coil regions span residues 122-179 and 280-346; these read ETQQ…QKLH and QQQL…AANV. The segment covering 294–340 has biased composition (basic and acidic residues); it reads ERQRQQQQEEERQKLEEQQKLEEQEKLRKEKEESAAKEKQQEAETAK.

This sequence belongs to the GLE1 family. May associate with the NPC.

The protein resides in the cytoplasm. It is found in the nucleus. Its subcellular location is the nuclear pore complex. In terms of biological role, required for the export of mRNAs containing poly(A) tails from the nucleus into the cytoplasm. May be involved in the terminal step of the mRNA transport through the nuclear pore complex (NPC). The polypeptide is mRNA export factor Gle1 (Drosophila melanogaster (Fruit fly)).